The primary structure comprises 154 residues: Ribonuclease H (154 aa).

One can recognise an RNase H type-1 domain in the interval 5–146 (EQNIVYLYCD…ADELANRGID (142 aa)). Positions 14, 52, 74, and 138 each coordinate Mg(2+).

It belongs to the RNase H family. In terms of assembly, monomer. Mg(2+) serves as cofactor.

It is found in the cytoplasm. The catalysed reaction is Endonucleolytic cleavage to 5'-phosphomonoester.. In terms of biological role, endonuclease that specifically degrades the RNA of RNA-DNA hybrids. The sequence is that of Ribonuclease H from Coxiella burnetii (strain RSA 331 / Henzerling II).